The primary structure comprises 184 residues: dCTP deaminase (184 aa).

A dCTP-binding site is contributed by 107–112 (KSTYAR). Glutamate 133 acts as the Proton donor/acceptor in catalysis. The dCTP site is built by glutamine 152, tyrosine 166, and glutamine 176.

The protein belongs to the dCTP deaminase family. In terms of assembly, homotrimer.

The enzyme catalyses dCTP + H2O + H(+) = dUTP + NH4(+). Its pathway is pyrimidine metabolism; dUMP biosynthesis; dUMP from dCTP (dUTP route): step 1/2. Catalyzes the deamination of dCTP to dUTP. The sequence is that of dCTP deaminase from Acidiphilium cryptum (strain JF-5).